Reading from the N-terminus, the 1024-residue chain is MATLDLCNNEHLNETESADEEDDQLQTPIKTVVTLKFKENPDSTSPIQVFQLNIGSNIIGRGSPSFLNDIKISRRHAEIIVSAEVGNVTFNQLGQNHSTLYRKDQTPIKMVRGISNQLLDDDLISLYDGSIPFSIHIERDNQFMSVCEGNFILTQDAADTNYHINSPTKTITTTSTTTTTTETLIKNIDNNNNNNNNNNNNNNNNNNNNNNNNNNNNNNNNNNNNNNNNNNNNNNNNNNNNNNNSILSKRSRDNENNHNHQYIHHDKTPLTLQQQQQLQNQQQLHQQQQQQLQYEQLQQLQQLQQHQQQQQHQQQQQQQQQQQQQQQQQQQQQQFKKHKRENTPVIVEDSLKLNIQENELLFIKKIGSGACGEVCQYEWKGTPVAVKTIFKSLLRKDKKEEFEKEVSILKCLRHPNVVLFMGTCLLNGNLAIITEYLNRGSLRDVLTTMNKSELSLSVKVKMLIDVAQGMNYLHTYSPPIIHRDLKSLNLLVDNNFNVKVSDFGLSRFISGGIGSSAKTFCGTLSWIAPEVFNGSGYTTKVDVYSFGIVLWEILTHKQPSGNISATSLGHPELPSNCPQSFSDLIKECCNRNPDQRPNFSQILLKLKLMYNQINNNNNNNKIDSSSFHNNNNNCSYNNSNDNNGILVTGGVGGNVSGNVESNNNNNNNTLNGAGNVIILNEIKDFTIQPNEITNIKTIIVKDSYSILEGQYKGKLVSIKQINGSINDFEMKQLGVLASIKSPLAVRFIGVVFNTDEYAIISEHVGNNGSLLTLMQNHSNQLNWSNTIDLAIQITQSIQYLHKHQPPILHRNITSDCFLLSSLNNNSNQNNNNNNNNNNNNNNNNNNNNNNNKKNDGGDDNGENTNTTTTTTTTTTTATNITNELNINEIKIKVHDFGLSRFNTQENEESLKEIKGNFLYSPPELLSLNTYSNKSDIYSLSIVLYELFETCLTKTYKKPYHEVTLDFDFQIIHKTSKLNLRPTISNNMPNEISKILQQGWFSDSVLRPSLDTIIKELLICKKNLC.

Positions 187–261 (NIDNNNNNNN…RDNENNHNHQ (75 aa)) are disordered. Over residues 190 to 244 (NNNNNNNNNNNNNNNNNNNNNNNNNNNNNNNNNNNNNNNNNNNNNNNNNNNNNNN) the composition is skewed to low complexity. The segment covering 250–261 (RSRDNENNHNHQ) has biased composition (basic and acidic residues). Protein kinase domains lie at 360 to 609 (LLFI…LKLM) and 645 to 1018 (ILVT…ELLI). Residues 366–374 (IGSGACGEV) and Lys-387 contribute to the ATP site. Asp-484 acts as the Proton acceptor in catalysis. Residues 651–659 (VGGNVSGNV) and Lys-719 contribute to the ATP site. Low complexity-rich tracts occupy residues 823 to 851 (NNNSNQNNNNNNNNNNNNNNNNNNNNNNN) and 862 to 874 (ENTNTTTTTTTTT). The tract at residues 823 to 874 (NNNSNQNNNNNNNNNNNNNNNNNNNNNNNKKNDGGDDNGENTNTTTTTTTTT) is disordered.

Belongs to the protein kinase superfamily. TKL Ser/Thr protein kinase family.

The enzyme catalyses L-seryl-[protein] + ATP = O-phospho-L-seryl-[protein] + ADP + H(+). It carries out the reaction L-threonyl-[protein] + ATP = O-phospho-L-threonyl-[protein] + ADP + H(+). The chain is Probable serine/threonine-protein kinase DDB_G0271682 from Dictyostelium discoideum (Social amoeba).